A 1196-amino-acid chain; its full sequence is [NU+] prion formation protein 1 (1196 aa).

2 disordered regions span residues 1 to 49 (MPPK…KSSY) and 103 to 125 (TYKQSAVTPNQSGTPTPSASTTS). 2 stretches are compositionally biased toward polar residues: residues 39–49 (GSNNASKKSSY) and 103–113 (TYKQSAVTPNQ). Positions 114–125 (SGTPTPSASTTS) are enriched in low complexity. Position 443 is a phosphoserine (serine 443). 2 ABC transporter domains span residues 570 to 786 (IEIV…YYTL) and 812 to 1129 (AKMT…ADAV). ATP contacts are provided by residues 604–611 (GRNGAGKS) and 846–853 (GPNGAGKS). Positions 942 to 1003 (RAIEAIVGRQ…HEASREGLGY (62 aa)) constitute a Chromo domain. 2 disordered regions span residues 1137–1166 (AKPSVDDDDSPANIKVKQRKKRLTRNEKKL) and 1177–1196 (EWLSSPKGTPKPVDTDDEED). Residue threonine 1191 is modified to Phosphothreonine.

It belongs to the ABC transporter superfamily. ABCF family. EF3 subfamily.

The protein localises to the cytoplasm. It localises to the nucleus. In terms of biological role, may be involved in the mRNA export process. Forms the [NU+] prion and induces [PSI+] prion formation. The sequence is that of [NU+] prion formation protein 1 (NEW1) from Saccharomyces cerevisiae (strain ATCC 204508 / S288c) (Baker's yeast).